Consider the following 216-residue polypeptide: Thiopurine S-methyltransferase (216 aa).

S-adenosyl-L-methionine contacts are provided by W10, L45, E66, and R123.

Belongs to the class I-like SAM-binding methyltransferase superfamily. TPMT family.

The protein localises to the cytoplasm. The enzyme catalyses S-adenosyl-L-methionine + a thiopurine = S-adenosyl-L-homocysteine + a thiopurine S-methylether.. The chain is Thiopurine S-methyltransferase from Pseudomonas entomophila (strain L48).